The chain runs to 520 residues: ATP-dependent RNA helicase CshA (520 aa).

The short motif at Thr-2 to Glu-30 is the Q motif element. Positions Ile-33–Ile-203 constitute a Helicase ATP-binding domain. Ala-46–Thr-53 provides a ligand contact to ATP. Positions Asp-151–Asp-154 match the DEAD box motif. One can recognise a Helicase C-terminal domain in the interval Leu-214–Ala-374. Positions Lys-428 to Leu-439 are enriched in basic and acidic residues. The tract at residues Lys-428–Lys-520 is disordered. Composition is skewed to gly residues over residues Arg-442 to Gly-468 and Ser-482 to Gly-496.

It belongs to the DEAD box helicase family. CshA subfamily. In terms of assembly, oligomerizes, may be a member of the RNA degradosome.

It is found in the cytoplasm. The catalysed reaction is ATP + H2O = ADP + phosphate + H(+). Functionally, DEAD-box RNA helicase possibly involved in RNA degradation. Unwinds dsRNA in both 5'- and 3'-directions, has RNA-dependent ATPase activity. Involved in cold tolerance, motility and alcohol tolerance. This chain is ATP-dependent RNA helicase CshA, found in Listeria monocytogenes serovar 1/2a (strain ATCC BAA-679 / EGD-e).